We begin with the raw amino-acid sequence, 140 residues long: Small ribosomal subunit protein uS9 (140 aa).

This sequence belongs to the universal ribosomal protein uS9 family.

This Desulfurococcus amylolyticus (strain DSM 18924 / JCM 16383 / VKM B-2413 / 1221n) (Desulfurococcus kamchatkensis) protein is Small ribosomal subunit protein uS9.